We begin with the raw amino-acid sequence, 248 residues long: Metallo-beta-lactamase type 2 (248 aa).

An N-terminal signal peptide occupies residues 1-21; that stretch reads MKGLKGLLVLALGFTGLQVFG. Zn(2+) is bound by residues His-97, His-99, Asp-101, His-160, and Cys-179. Residue Lys-182 participates in substrate binding. Residue His-221 participates in Zn(2+) binding.

This sequence belongs to the metallo-beta-lactamase superfamily. Class-B beta-lactamase family. As to quaternary structure, monomer. Zn(2+) is required as a cofactor.

It is found in the periplasm. It carries out the reaction a beta-lactam + H2O = a substituted beta-amino acid. Its function is as follows. Confers resistance to the different beta-lactams antibiotics (penicillin, cephalosporin and carbapenem) via the hydrolysis of the beta-lactam ring. The sequence is that of Metallo-beta-lactamase type 2 (blaB8) from Elizabethkingia meningoseptica (Chryseobacterium meningosepticum).